Reading from the N-terminus, the 295-residue chain is 2-dehydropantoate 2-reductase (295 aa).

NADP(+)-binding positions include 9–14 (GPGAVG), Asn100, and Ala126. Substrate is bound at residue Asn100. Lys177 acts as the Proton donor in catalysis. Asn181 and Ser246 together coordinate substrate. Glu258 contacts NADP(+).

The protein belongs to the ketopantoate reductase family.

It is found in the cytoplasm. It catalyses the reaction (R)-pantoate + NADP(+) = 2-dehydropantoate + NADPH + H(+). Its pathway is cofactor biosynthesis; (R)-pantothenate biosynthesis; (R)-pantoate from 3-methyl-2-oxobutanoate: step 2/2. Its function is as follows. Catalyzes the NADPH-dependent reduction of ketopantoate into pantoic acid. This chain is 2-dehydropantoate 2-reductase, found in Mycobacterium tuberculosis (strain CDC 1551 / Oshkosh).